Reading from the N-terminus, the 532-residue chain is Probable rhamnogalacturonase B (532 aa).

The first 21 residues, 1 to 21 (MRINTLSLFSLVSLVPTLALA), serve as a signal peptide directing secretion. C42 and C68 are joined by a disulfide. D219 serves as the catalytic Proton donor. C221 and C238 form a disulfide bridge. N239 carries an N-linked (GlcNAc...) asparagine glycan. Residue H294 is part of the active site. N321 carries N-linked (GlcNAc...) asparagine glycosylation. Intrachain disulfides connect C344–C350 and C374–C383. Low complexity-rich tracts occupy residues 466–475 (TVAAATSTPA) and 490–499 (QPSQQSPGQS). The tract at residues 466–532 (TVAAATSTPA…HRHHQRHGHH (67 aa)) is disordered. The span at 521–532 (AGHRHHQRHGHH) shows a compositional bias: basic residues.

This sequence belongs to the glycosyl hydrolase 28 family.

The protein localises to the secreted. It catalyses the reaction Endohydrolysis of alpha-D-GalA-(1-&gt;2)-alpha-L-Rha glycosidic bond in the rhamnogalacturonan I backbone with initial inversion of anomeric configuration releasing oligosaccharides with beta-D-GalA at the reducing end.. Its function is as follows. Pectinolytic enzymes consist of four classes of enzymes: pectine lyase, polygalacturonase, pectin methylesterase and rhamnogalacturonase. Hydrolyzes alpha-D-galacturonopyranosyl-(1,2)-alpha-L-rhamnopyranosyl linkages in the backbone of the hairy regions of pectins. This Aspergillus oryzae (strain ATCC 42149 / RIB 40) (Yellow koji mold) protein is Probable rhamnogalacturonase B (rhgB).